Here is a 186-residue protein sequence, read N- to C-terminus: Protein GrpE (186 aa).

Residues 1–17 (MKDEHNQEHDLSQKELE) show a composition bias toward basic and acidic residues. Positions 1–32 (MKDEHNQEHDLSQKELESCENSCTCEGKKQEA) are disordered.

This sequence belongs to the GrpE family. Homodimer.

The protein localises to the cytoplasm. Participates actively in the response to hyperosmotic and heat shock by preventing the aggregation of stress-denatured proteins, in association with DnaK and GrpE. It is the nucleotide exchange factor for DnaK and may function as a thermosensor. Unfolded proteins bind initially to DnaJ; upon interaction with the DnaJ-bound protein, DnaK hydrolyzes its bound ATP, resulting in the formation of a stable complex. GrpE releases ADP from DnaK; ATP binding to DnaK triggers the release of the substrate protein, thus completing the reaction cycle. Several rounds of ATP-dependent interactions between DnaJ, DnaK and GrpE are required for fully efficient folding. This chain is Protein GrpE, found in Helicobacter acinonychis (strain Sheeba).